The sequence spans 130 residues: MIIGIGTDILQIERLQAAYDRTNGRLAEKVLGPDEMLVFKHRLARNHKRGIAFLATRFAAKEAFSKAIGLGMHMPMTWRSLQTLNEPSGKPITSYLGALAQFMAEKNWEAHITVSDEQDMAIAHVIVTQK.

Mg(2+)-binding residues include D8 and E62.

This sequence belongs to the P-Pant transferase superfamily. AcpS family. Requires Mg(2+) as cofactor.

Its subcellular location is the cytoplasm. It catalyses the reaction apo-[ACP] + CoA = holo-[ACP] + adenosine 3',5'-bisphosphate + H(+). Functionally, transfers the 4'-phosphopantetheine moiety from coenzyme A to a Ser of acyl-carrier-protein. In Polynucleobacter asymbioticus (strain DSM 18221 / CIP 109841 / QLW-P1DMWA-1) (Polynucleobacter necessarius subsp. asymbioticus), this protein is Holo-[acyl-carrier-protein] synthase.